The chain runs to 341 residues: S-adenosylmethionine:tRNA ribosyltransferase-isomerase (341 aa).

Belongs to the QueA family. Monomer.

The protein localises to the cytoplasm. It carries out the reaction 7-aminomethyl-7-carbaguanosine(34) in tRNA + S-adenosyl-L-methionine = epoxyqueuosine(34) in tRNA + adenine + L-methionine + 2 H(+). It participates in tRNA modification; tRNA-queuosine biosynthesis. In terms of biological role, transfers and isomerizes the ribose moiety from AdoMet to the 7-aminomethyl group of 7-deazaguanine (preQ1-tRNA) to give epoxyqueuosine (oQ-tRNA). This Alkaliphilus metalliredigens (strain QYMF) protein is S-adenosylmethionine:tRNA ribosyltransferase-isomerase.